Reading from the N-terminus, the 219-residue chain is Uracil-DNA glycosylase (219 aa).

The Proton acceptor role is filled by Asp-61.

The protein belongs to the uracil-DNA glycosylase (UDG) superfamily. UNG family.

The protein resides in the cytoplasm. It catalyses the reaction Hydrolyzes single-stranded DNA or mismatched double-stranded DNA and polynucleotides, releasing free uracil.. Its function is as follows. Excises uracil residues from the DNA which can arise as a result of misincorporation of dUMP residues by DNA polymerase or due to deamination of cytosine. This chain is Uracil-DNA glycosylase, found in Neisseria meningitidis serogroup A / serotype 4A (strain DSM 15465 / Z2491).